Consider the following 63-residue polypeptide: Cypmaclein (63 aa).

The protein belongs to the GASA family. Expressed in pollen (at protein level).

The polypeptide is Cypmaclein (Cupressus sempervirens (Italian cypress)).